Here is a 170-residue protein sequence, read N- to C-terminus: Photosystem I assembly protein Ycf3 (170 aa).

TPR repeat units follow at residues 35–68 (AFTYYRDGMLAQSEGNYAEALQNYYEATRLEIDP), 72–105 (SYILYNIGLIHTSNGEHTKALEYYFRALERNPFL), and 120–153 (GEQAILQGDSEIAEAWFDQAAEYWKQAIALTPGN).

It belongs to the Ycf3 family.

It localises to the plastid. It is found in the chloroplast thylakoid membrane. Its function is as follows. Essential for the assembly of the photosystem I (PSI) complex. May act as a chaperone-like factor to guide the assembly of the PSI subunits. This chain is Photosystem I assembly protein Ycf3, found in Saccharum officinarum (Sugarcane).